Reading from the N-terminus, the 514-residue chain is MKLLTDWLVLDGCSLAVDDLVAVARGGVPVRLSPASLELVRRSRAFVEALLEGDEIVYGITTGFGYFKNRRIPRSAVEQLQQNLLMSSAAGLGEPFGREVVRAMLLLRANTLAQGYSGVRPETLQLLVAMLNRGVHPVVPCRGSVGASGDLAPLAHLALVLTGEGEAEVGGEVLPGAAALARAGLEPIRLGAKEGLALINGTQAMSALGALTVHRAQRLAKLADLACAMTLEATLGSRSAFLPHFHRLRPHPGQQSSARNLLVLTEDSALIASHAGCDRVQDAYSLRCAPQVHGASLDAISYAAGVIAIEINSVTDNPLIFADTGQVVTGGHFHGQPVAMASDVLAIALAELADISERRTERLVNADYSNGLPMFLTEAGGLHSGYMVAQYTAASLVSENKVLAHPACVDSIPTSAGQEDHVSMGLTAARKAVTVCDNCERVIAIELMCAAQALDLRGKLTPGRGSRVGLEVIRAAVPHLESDRIVSRDIEKVVELMADGHLLEAVEAACGRLD.

Residues Ala147–Gly149 constitute a cross-link (5-imidazolinone (Ala-Gly)). Ser148 carries the post-translational modification 2,3-didehydroalanine (Ser).

This sequence belongs to the PAL/histidase family. In terms of processing, contains an active site 4-methylidene-imidazol-5-one (MIO), which is formed autocatalytically by cyclization and dehydration of residues Ala-Ser-Gly.

It localises to the cytoplasm. It catalyses the reaction L-histidine = trans-urocanate + NH4(+). It functions in the pathway amino-acid degradation; L-histidine degradation into L-glutamate; N-formimidoyl-L-glutamate from L-histidine: step 1/3. The chain is Histidine ammonia-lyase from Gloeobacter violaceus (strain ATCC 29082 / PCC 7421).